Reading from the N-terminus, the 294-residue chain is Nucleotide-binding protein CLJ_B3680 (294 aa).

8–15 serves as a coordination point for ATP; sequence GLSGAGKT. Residue 59–62 coordinates GTP; the sequence is DIRG.

This sequence belongs to the RapZ-like family.

Its function is as follows. Displays ATPase and GTPase activities. The protein is Nucleotide-binding protein CLJ_B3680 of Clostridium botulinum (strain 657 / Type Ba4).